Here is a 326-residue protein sequence, read N- to C-terminus: tRNA-modifying protein YgfZ (326 aa).

Residues W27 and W189 each coordinate folate.

This sequence belongs to the tRNA-modifying YgfZ family.

The protein resides in the cytoplasm. Its function is as follows. Folate-binding protein involved in regulating the level of ATP-DnaA and in the modification of some tRNAs. It is probably a key factor in regulatory networks that act via tRNA modification, such as initiation of chromosomal replication. The sequence is that of tRNA-modifying protein YgfZ from Escherichia coli O45:K1 (strain S88 / ExPEC).